Here is a 920-residue protein sequence, read N- to C-terminus: Histone-lysine N-methyltransferase, H3 lysine-4 specific (920 aa).

The RRM domain occupies 94–179 (TQVFVSNISP…KPLSVVLDRD (86 aa)). The span at 205–216 (KQRFEREDESSR) shows a compositional bias: basic and acidic residues. Disordered stretches follow at residues 205–242 (KQRFEREDESSRQKLSAAMNEDIPPWRQPSKNSQTLSN) and 448–485 (KRVDSSKMNLSAGSKTKSKLQRRRRRRHEARPLHYQLN). Composition is skewed to polar residues over residues 233 to 242 (PSKNSQTLSN) and 453 to 462 (SKMNLSAGSK). Residues 463 to 476 (TKSKLQRRRRRRHE) are compositionally biased toward basic residues. A RxxxRR motif motif is present at residues 749 to 754 (RVNNRR). The region spanning 781–898 (KQLHFGPSRI…HGEELTYDYK (118 aa)) is the SET domain. An S-adenosyl-L-methionine-binding site is contributed by Tyr-897. Residues 904–920 (DKIPCLCGAPTCRGYLN) form the Post-SET domain.

This sequence belongs to the class V-like SAM-binding methyltransferase superfamily. As to quaternary structure, component of the Set1C/COMPASS complex composed of ash2, sdc1, set1, shg1, spp1, swd1, swd2 and swd3.

Its subcellular location is the nucleus. The protein resides in the chromosome. It catalyses the reaction L-lysyl(4)-[histone H3] + 3 S-adenosyl-L-methionine = N(6),N(6),N(6)-trimethyl-L-lysyl(4)-[histone H3] + 3 S-adenosyl-L-homocysteine + 3 H(+). The enzyme catalyses N(6)-methyl-L-lysyl(4)-[histone H3] + S-adenosyl-L-methionine = N(6),N(6)-dimethyl-L-lysyl(4)-[histone H3] + S-adenosyl-L-homocysteine + H(+). The catalysed reaction is N(6),N(6)-dimethyl-L-lysyl(4)-[histone H3] + S-adenosyl-L-methionine = N(6),N(6),N(6)-trimethyl-L-lysyl(4)-[histone H3] + S-adenosyl-L-homocysteine + H(+). In terms of biological role, catalytic component of the COMPASS (Set1C) complex that specifically mono-, di- and trimethylates histone H3 to form H3K4me1/2/3. Binds RNA which might negatively affect its histone methyltransferase activity. COMPASS recognizes ubiquitinated H2B on one face of the nucleosome which stimulates the methylation of H3 on the opposing face. Methylation promotes maintenance of active chromatin states at euchromatic chromosomal domains and is present throughout the cell cycle. Plays a role in telomere maintenance and DNA repair in an ATM kinase rad3-dependent pathway. Required for efficient telomeric and centromeric silencing. This is Histone-lysine N-methyltransferase, H3 lysine-4 specific from Schizosaccharomyces pombe (strain 972 / ATCC 24843) (Fission yeast).